Consider the following 1581-residue polypeptide: Maestro heat-like repeat-containing protein family member 2B (1581 aa).

HEAT repeat units follow at residues 123–160, 305–342, 401–441, 464–501, 526–543, 544–580, 658–695, 773–815, 960–997, 1017–1055, 1112–1150, 1153–1191, 1254–1291, 1295–1332, 1359–1379, and 1380–1416; these read FMMM…SIYK, ANPV…AEEP, MSNR…LVIG, DYLF…KLPS, AIGL…KLAE, MWKT…SLWK, ENHL…LTKT, TYKE…LKPA, CQEV…KFIP, PLCT…HMPV, KLMR…TGAH, HLYP…LGER, GVIL…EPIL, GNLR…GAPH, CESL…DINF, and YFKE…LTGR.

In terms of assembly, found in a complex at least composed of MROH2B isoform 2, PRKACA isoform 2 and TCP11. Interacts with PRKACA isoform 2. Interacts with TCP11. Constitutively phosphorylated on serine and threonine residues in acrosomal region of the sperm head, midpiece and flagellar regions of noncapacitated spermatozoa. Phosphorylation on tyrosine residues increases upon sperm capacitation within the acrosomal and tail regions in a protein kinase A (PKA)-dependent signaling pathway. In terms of tissue distribution, expressed strongly in round spermatids and fully mature spermatozoa. Expressed weakly in pachytene spermatocytes (at protein level). Isoform 2 is specifically expressed in the testis. Isoform 2 is expressed in pachytene spermatocytes and round spermatids. Isoform 3 is weakly expressed in testis.

Its subcellular location is the cytoplasm. It localises to the cytoplasmic vesicle. The protein localises to the secretory vesicle. The protein resides in the acrosome. It is found in the cell projection. Its subcellular location is the cilium. It localises to the flagellum. Functionally, may play a role in the process of sperm capacitation. The protein is Maestro heat-like repeat-containing protein family member 2B of Mus musculus (Mouse).